Here is a 268-residue protein sequence, read N- to C-terminus: Secreted RxLR effector protein 5 (268 aa).

A signal peptide spans 1-21 (MRGAFYMAITLFLARSRSATA). The short motif at 48–63 (RYLRDGLALSAANEER) is the RxLR-dEER element. Asparagine 104 is a glycosylation site (N-linked (GlcNAc...) asparagine).

The protein belongs to the RxLR effector family.

It localises to the secreted. It is found in the host nucleus. In terms of biological role, effector that acts as a broad suppressor of cell death to interrupt plant immunity. Inhibits cell death induced by cell death-inducing proteins, including the PAMP elicitor INF1 from P.infestans. This Plasmopara viticola (Downy mildew of grapevine) protein is Secreted RxLR effector protein 5.